The chain runs to 946 residues: MKPLSSPLQQYWQTVVERLPEPLAEKSLSAQAKSVLTFSDFVQDSVIAHPEWLTELESQSPQADEWQHYAAWLQEALSNVSDEAGLMRELRLFRRRIMVRIAWAQTLALVTEESILQQLSHLAETLIVAARDWLYDACCREWGTPCNAQGEAQPLLILGMGKLGGGELNFSSDIDLIFAWPEHGCTQGGRRELDNAQFFTRMGQRLIKVLDQPTQDGFVYRVDMRLRPFGESGPLVLSFAALEDYYQEQGRDWERYAMVKARIMGDSEGVYANELRAMLRPFVFRRYIDFSVIQSLRNMKGMIAREVRRRGLTDNIKLGAGGIREIEFIVQVFQLIRGGREPSLQSRSLLPTLSAIAALHLLSENDAEQLRVAYLFLRRLENLLQSINDEQTQTLPSDELNRARLAWAMDFADWPQLTGALTAHMTNVRRVFNELIGDDESETQEESLSEQWRELWQDALQEDDTTPVLAHLSEDDRKQVLTLIADFRKELDKRTIGPRGRQVLDHLMPHLLSDVCAREDAAVTLSRITALLVGIVTRTTYLELLSEFRAALKHLISLCAASPMIASQLARYPLLLDELLDPNTLYQPTATDAYRDELRQYLLRVPEDDEEQQLEALRQFKQAQLLRIAAADIAGTLPVMKVSDHLTWLAEAMIDAVVQQAWVQMVARYGKPNHLNDREGRGFAVVGYGKLGGWELGYSSDLDLIFLHDCPMDAMTDGEREIDGRQFYLRLAQRIMHLFSTRTSSGILYEVDARLRPSGAAGMLVTSAEAFADYQKNEAWTWEHQALVRARVVYGDPQLTAHFDAVRREIMTLPREGKTLQTEVREMREKMRAHLGNKHRNRFDIKADEGGITDIEFITQYLVLRYAHEKPKLTRWSDNVRILELLAQNDIMEEQEAMALTRAYTTLRDELHHLALQELPGHVPEDCFTAERELVRASWQKWLVEE.

An adenylyl removase region spans residues 1-440; the sequence is MKPLSSPLQQ…VFNELIGDDE (440 aa). Positions 449–946 are adenylyl transferase; that stretch reads SEQWRELWQD…ASWQKWLVEE (498 aa).

It belongs to the GlnE family. Mg(2+) serves as cofactor.

The enzyme catalyses [glutamine synthetase]-O(4)-(5'-adenylyl)-L-tyrosine + phosphate = [glutamine synthetase]-L-tyrosine + ADP. The catalysed reaction is [glutamine synthetase]-L-tyrosine + ATP = [glutamine synthetase]-O(4)-(5'-adenylyl)-L-tyrosine + diphosphate. In terms of biological role, involved in the regulation of glutamine synthetase GlnA, a key enzyme in the process to assimilate ammonia. When cellular nitrogen levels are high, the C-terminal adenylyl transferase (AT) inactivates GlnA by covalent transfer of an adenylyl group from ATP to specific tyrosine residue of GlnA, thus reducing its activity. Conversely, when nitrogen levels are low, the N-terminal adenylyl removase (AR) activates GlnA by removing the adenylyl group by phosphorolysis, increasing its activity. The regulatory region of GlnE binds the signal transduction protein PII (GlnB) which indicates the nitrogen status of the cell. The chain is Bifunctional glutamine synthetase adenylyltransferase/adenylyl-removing enzyme from Escherichia coli O8 (strain IAI1).